The chain runs to 309 residues: Olfactory receptor 5AC2 (309 aa).

The Extracellular segment spans residues 1–27; that stretch reads MDISEGNKTLVTEFVLTGLTDRPWLHV. Residue N7 is glycosylated (N-linked (GlcNAc...) asparagine). Residues 28–48 form a helical membrane-spanning segment; that stretch reads LFFVVFLVVYLITMVGNLGLI. The Cytoplasmic segment spans residues 49–56; the sequence is VLIWNDPH. Residues 57–77 form a helical membrane-spanning segment; the sequence is LHMPMYLFLGGLAFSDACTST. Residues 78 to 101 are Extracellular-facing; it reads SITPRMLVNFLDKTAMISLAECIT. C99 and C191 are disulfide-bonded. Residues 102 to 122 traverse the membrane as a helical segment; sequence QFYFFASSATTECFLLVMMAY. The Cytoplasmic segment spans residues 123-135; it reads DRYVAICNPLLYP. The helical transmembrane segment at 136–156 threads the bilayer; it reads VMMSNKLSAQLLSISYVIGFL. The Extracellular segment spans residues 157–198; it reads HPLVHVSLLLRLTFCRFNIIHYFYCEILQLFKISCNGPSINA. A helical membrane pass occupies residues 199-219; the sequence is LMIFIFGAFIQIPTLMTIIIS. At 220-239 the chain is on the cytoplasmic side; it reads YTRVLFDILKKKSEKGRSKA. Residues 240-260 form a helical membrane-spanning segment; sequence FSTCGAHLLSVSLYYGTLIFM. The Extracellular segment spans residues 261 to 273; it reads YVRPASGLAEDQD. A helical transmembrane segment spans residues 274–294; that stretch reads KVYSLFYTIIIPLLNPFIYSL. Topologically, residues 295 to 309 are cytoplasmic; it reads RNKKVMHALRRVIRK.

Belongs to the G-protein coupled receptor 1 family.

It localises to the cell membrane. Its function is as follows. Odorant receptor. The polypeptide is Olfactory receptor 5AC2 (OR5AC2) (Homo sapiens (Human)).